A 276-amino-acid chain; its full sequence is Light-independent protochlorophyllide reductase iron-sulfur ATP-binding protein (276 aa).

ATP is bound by residues 12-17 (GIGKST) and Lys-41. Ser-16 is a Mg(2+) binding site. [4Fe-4S] cluster-binding residues include Cys-97 and Cys-131. 182–183 (NR) is an ATP binding site.

The protein belongs to the NifH/BchL/ChlL family. As to quaternary structure, homodimer. Protochlorophyllide reductase is composed of three subunits; BchL, BchN and BchB. The cofactor is [4Fe-4S] cluster.

It carries out the reaction chlorophyllide a + oxidized 2[4Fe-4S]-[ferredoxin] + 2 ADP + 2 phosphate = protochlorophyllide a + reduced 2[4Fe-4S]-[ferredoxin] + 2 ATP + 2 H2O. Its pathway is porphyrin-containing compound metabolism; bacteriochlorophyll biosynthesis (light-independent). Component of the dark-operative protochlorophyllide reductase (DPOR) that uses Mg-ATP and reduced ferredoxin to reduce ring D of protochlorophyllide (Pchlide) to form chlorophyllide a (Chlide). This reaction is light-independent. The L component serves as a unique electron donor to the NB-component of the complex, and binds Mg-ATP. The chain is Light-independent protochlorophyllide reductase iron-sulfur ATP-binding protein from Chlorobaculum tepidum (strain ATCC 49652 / DSM 12025 / NBRC 103806 / TLS) (Chlorobium tepidum).